The primary structure comprises 734 residues: Threonine--tRNA ligase, cytoplasmic (734 aa).

Positions 1–41 are disordered; it reads MSASEAGVTEQVKKLSVKDSSNDAVKPNKKENKKSKQQSLY. A compositionally biased stretch (basic and acidic residues) spans 11-30; it reads QVKKLSVKDSSNDAVKPNKK. Residues 69-135 enclose the TGS domain; that stretch reads SMPRVPLKIV…EGEANEEIKL (67 aa). 2 positions are modified to phosphoserine: Ser195 and Ser289. Thr297 and Thr381 each carry phosphothreonine. Residues Ser453 and Ser457 each carry the phosphoserine modification. Thr460 carries the post-translational modification Phosphothreonine. A Phosphoserine modification is found at Ser605.

The protein belongs to the class-II aminoacyl-tRNA synthetase family.

The protein resides in the cytoplasm. It carries out the reaction tRNA(Thr) + L-threonine + ATP = L-threonyl-tRNA(Thr) + AMP + diphosphate + H(+). The polypeptide is Threonine--tRNA ligase, cytoplasmic (THS1) (Saccharomyces cerevisiae (strain ATCC 204508 / S288c) (Baker's yeast)).